A 698-amino-acid polypeptide reads, in one-letter code: Testis-specific gene 10 protein (698 aa).

The residue at position 163 (Ser163) is a Phosphoserine. The tract at residues 556 to 689 (QMANERISMQ…SPDRGLDRSL (134 aa)) is interaction with HIF1A. A compositionally biased stretch (polar residues) spans 659–670 (HMSSTMKPNTKC). The tract at residues 659–685 (HMSSTMKPNTKCHSPERAHHRSPDRGL) is disordered. The segment covering 671-685 (HSPERAHHRSPDRGL) has biased composition (basic and acidic residues). Phosphoserine is present on Ser688.

This sequence belongs to the CEP135/TSGA10 family. In terms of assembly, interacts with HIF1A. In terms of processing, processed into N-terminal 27-kDa and C-terminal 55-kDa fragments. Expressed in the testis, in spermatozoa (at protein level). Expressed in actively dividing fetal tissues, including sternum, intestine, limb, kidney and stomach.

Its subcellular location is the cytoplasm. The protein resides in the cytoskeleton. The protein localises to the microtubule organizing center. It is found in the centrosome. It localises to the centriole. Functionally, plays a role in spermatogenesis. When overexpressed, prevents nuclear localization of HIF1A. The sequence is that of Testis-specific gene 10 protein (TSGA10) from Homo sapiens (Human).